A 318-amino-acid polypeptide reads, in one-letter code: DNA-directed RNA polymerase subunit alpha 2 (318 aa).

Positions 1–227 (MALENLLHPT…NQLRNILDIE (227 aa)) are alpha N-terminal domain (alpha-NTD). Positions 242–318 (INPILLKHVE…TLIENWPQDL (77 aa)) are alpha C-terminal domain (alpha-CTD).

It belongs to the RNA polymerase alpha chain family. Homodimer. The RNAP catalytic core consists of 2 alpha, 1 beta, 1 beta' and 1 omega subunit. When a sigma factor is associated with the core the holoenzyme is formed, which can initiate transcription.

The enzyme catalyses RNA(n) + a ribonucleoside 5'-triphosphate = RNA(n+1) + diphosphate. Functionally, DNA-dependent RNA polymerase catalyzes the transcription of DNA into RNA using the four ribonucleoside triphosphates as substrates. The polypeptide is DNA-directed RNA polymerase subunit alpha 2 (Francisella tularensis subsp. tularensis (strain FSC 198)).